A 492-amino-acid polypeptide reads, in one-letter code: Adenylyltransferase and sulfurtransferase uba4 (492 aa).

ATP-binding positions include Gly99, Asp120, 127 to 131 (SNLHR), Lys144, and 188 to 189 (DN). Residues Cys237 and Cys240 each coordinate Zn(2+). Catalysis depends on Cys254, which acts as the Glycyl thioester intermediate; for adenylyltransferase activity. Zn(2+) contacts are provided by Cys317 and Cys320. The 113-residue stretch at 378–490 (GSKEPTIIDV…WREQIDPDWP (113 aa)) folds into the Rhodanese domain. The Cysteine persulfide intermediate; for sulfurtransferase activity role is filled by Cys445.

The protein in the N-terminal section; belongs to the HesA/MoeB/ThiF family. UBA4 subfamily. Zn(2+) serves as cofactor.

The protein resides in the cytoplasm. Its subcellular location is the cytosol. It catalyses the reaction [molybdopterin-synthase sulfur-carrier protein]-C-terminal Gly-Gly + ATP + H(+) = [molybdopterin-synthase sulfur-carrier protein]-C-terminal Gly-Gly-AMP + diphosphate. The enzyme catalyses [molybdopterin-synthase sulfur-carrier protein]-C-terminal Gly-Gly-AMP + S-sulfanyl-L-cysteinyl-[cysteine desulfurase] + AH2 = [molybdopterin-synthase sulfur-carrier protein]-C-terminal-Gly-aminoethanethioate + L-cysteinyl-[cysteine desulfurase] + A + AMP + 2 H(+). It participates in tRNA modification; 5-methoxycarbonylmethyl-2-thiouridine-tRNA biosynthesis. Its pathway is cofactor biosynthesis; molybdopterin biosynthesis. In terms of biological role, plays a central role in 2-thiolation of mcm(5)S(2)U at tRNA wobble positions of cytosolic tRNA(Lys), tRNA(Glu) and tRNA(Gln). Also essential during biosynthesis of the molybdenum cofactor. Acts by mediating the C-terminal thiocarboxylation of sulfur carriers urm1 and mocs2a. Its N-terminus first activates urm1 and mocs2a as acyl-adenylates (-COAMP), then the persulfide sulfur on the catalytic cysteine is transferred to urm1 and mocs2a to form thiocarboxylation (-COSH) of their C-terminus. The reaction probably involves hydrogen sulfide that is generated from the persulfide intermediate and that acts as a nucleophile towards urm1 and mocs2a. Subsequently, a transient disulfide bond is formed. Does not use thiosulfate as sulfur donor; nfs1 probably acting as a sulfur donor for thiocarboxylation reactions. The protein is Adenylyltransferase and sulfurtransferase uba4 of Aspergillus clavatus (strain ATCC 1007 / CBS 513.65 / DSM 816 / NCTC 3887 / NRRL 1 / QM 1276 / 107).